The primary structure comprises 210 residues: MSPSQDPSLENYRAIADGIATLFFPHAEVVLHDLRSQRVDYIANNLSKREVGDDSALEDMLEGDSDERNIGPYEKLNWDGQKIRSVSTVLRDSAGQPLAVLCINLNISLFESAKAALDLFLSPSKLIPQPDALFRDDWQERINTFLHGWLRQRQLGLNLLTREHKRELVLALHAEGAFKGKSAANYVANVLNMGRATVYKHLKELKEGGD.

The protein belongs to the DauR family.

DauR represses the dauBAR operon. This Pseudomonas aeruginosa (strain ATCC 15692 / DSM 22644 / CIP 104116 / JCM 14847 / LMG 12228 / 1C / PRS 101 / PAO1) protein is Transcriptional regulator DauR.